The following is a 434-amino-acid chain: Maltoporin (434 aa).

The N-terminal stretch at 1–25 (MKMKAKWLPIAAAVTAALASQAAFA) is a signal peptide.

It belongs to the porin LamB (TC 1.B.3) family. As to quaternary structure, homotrimer formed of three 18-stranded antiparallel beta-barrels, containing three independent channels.

It localises to the cell outer membrane. The enzyme catalyses beta-maltose(in) = beta-maltose(out). In terms of biological role, involved in the transport of maltose and maltodextrins. This Aeromonas hydrophila protein is Maltoporin.